A 528-amino-acid chain; its full sequence is Probable cyclic di-GMP phosphodiesterase PdeC (528 aa).

The next 2 helical transmembrane spans lie at 14 to 34 (GIIF…FLWA) and 242 to 262 (HLIF…LLWL). One can recognise an EAL domain in the interval 268–520 (YLSPKRKLQR…VFMQWMEQLP (253 aa)).

The protein resides in the cell inner membrane. The enzyme catalyses 3',3'-c-di-GMP + H2O = 5'-phosphoguanylyl(3'-&gt;5')guanosine + H(+). Functionally, phosphodiesterase (PDE) that catalyzes the hydrolysis of cyclic-di-GMP (c-di-GMP) to 5'-pGpG. Cyclic-di-GMP is a second messenger which controls cell surface-associated traits in bacteria. Overexpression reduces biofilm formation. In Escherichia coli (strain K12), this protein is Probable cyclic di-GMP phosphodiesterase PdeC.